We begin with the raw amino-acid sequence, 409 residues long: Protein ROOT PRIMORDIUM DEFECTIVE 1 (409 aa).

One can recognise a PORR domain in the interval 47 to 386 (VRDHGYDNYM…RLAELVLMSP (340 aa)).

In terms of tissue distribution, expressed in roots, hypocotyls, cotyledons and shoot apex.

Its function is as follows. Involved in pre-arranging the maintenance of the active cell proliferation during root primordium development. Does not seem to be involved in cell cycle progression. In Arabidopsis thaliana (Mouse-ear cress), this protein is Protein ROOT PRIMORDIUM DEFECTIVE 1 (RPD1).